Reading from the N-terminus, the 212-residue chain is Ribosomal RNA small subunit methyltransferase G (212 aa).

S-adenosyl-L-methionine contacts are provided by residues glycine 80, leucine 85, 131 to 132 (AE), and arginine 146.

It belongs to the methyltransferase superfamily. RNA methyltransferase RsmG family.

The protein resides in the cytoplasm. It catalyses the reaction guanosine(527) in 16S rRNA + S-adenosyl-L-methionine = N(7)-methylguanosine(527) in 16S rRNA + S-adenosyl-L-homocysteine. Functionally, specifically methylates the N7 position of guanine in position 527 of 16S rRNA. This chain is Ribosomal RNA small subunit methyltransferase G, found in Stenotrophomonas maltophilia (strain K279a).